We begin with the raw amino-acid sequence, 124 residues long: Large ribosomal subunit protein uL18 (124 aa).

The protein belongs to the universal ribosomal protein uL18 family. In terms of assembly, part of the 50S ribosomal subunit; part of the 5S rRNA/L5/L18/L25 subcomplex. Contacts the 5S and 23S rRNAs.

This is one of the proteins that bind and probably mediate the attachment of the 5S RNA into the large ribosomal subunit, where it forms part of the central protuberance. This Thermomicrobium roseum (strain ATCC 27502 / DSM 5159 / P-2) protein is Large ribosomal subunit protein uL18.